A 592-amino-acid chain; its full sequence is Aspartate--tRNA ligase (592 aa).

An L-aspartate-binding site is contributed by E173. The aspartate stretch occupies residues 197-200; sequence QLFK. R219 serves as a coordination point for L-aspartate. Residues 219-221 and Q228 contribute to the ATP site; that span reads RDE. H448 contacts L-aspartate. E482 contributes to the ATP binding site. Position 489 (R489) interacts with L-aspartate. 534–537 contributes to the ATP binding site; that stretch reads GLDR.

Belongs to the class-II aminoacyl-tRNA synthetase family. Type 1 subfamily. In terms of assembly, homodimer.

It localises to the cytoplasm. The catalysed reaction is tRNA(Asp) + L-aspartate + ATP = L-aspartyl-tRNA(Asp) + AMP + diphosphate. Catalyzes the attachment of L-aspartate to tRNA(Asp) in a two-step reaction: L-aspartate is first activated by ATP to form Asp-AMP and then transferred to the acceptor end of tRNA(Asp). This Shewanella baltica (strain OS223) protein is Aspartate--tRNA ligase.